Here is a 61-residue protein sequence, read N- to C-terminus: Small ribosomal subunit protein uS14 (61 aa).

4 residues coordinate Zn(2+): Cys24, Cys27, Cys40, and Cys43.

This sequence belongs to the universal ribosomal protein uS14 family. Zinc-binding uS14 subfamily. As to quaternary structure, part of the 30S ribosomal subunit. Contacts proteins S3 and S10. Zn(2+) is required as a cofactor.

Functionally, binds 16S rRNA, required for the assembly of 30S particles and may also be responsible for determining the conformation of the 16S rRNA at the A site. The protein is Small ribosomal subunit protein uS14 of Symbiobacterium thermophilum (strain DSM 24528 / JCM 14929 / IAM 14863 / T).